The sequence spans 395 residues: Elongation factor Tu (395 aa).

The tr-type G domain occupies 10 to 204; the sequence is KPHVNIGTIG…TVDSYIPEPA (195 aa). Residues 19–26 form a G1 region; that stretch reads GHVDHGKT. 19 to 26 lines the GTP pocket; sequence GHVDHGKT. A Mg(2+)-binding site is contributed by threonine 26. Positions 60 to 64 are G2; the sequence is GITIN. The tract at residues 81–84 is G3; that stretch reads DAPG. Residues 81 to 85 and 136 to 139 each bind GTP; these read DAPGH and NKTD. A G4 region spans residues 136–139; sequence NKTD. The interval 174–176 is G5; sequence SAL.

It belongs to the TRAFAC class translation factor GTPase superfamily. Classic translation factor GTPase family. EF-Tu/EF-1A subfamily. Monomer.

It localises to the cytoplasm. The enzyme catalyses GTP + H2O = GDP + phosphate + H(+). In terms of biological role, GTP hydrolase that promotes the GTP-dependent binding of aminoacyl-tRNA to the A-site of ribosomes during protein biosynthesis. The protein is Elongation factor Tu of Leuconostoc mesenteroides subsp. mesenteroides (strain ATCC 8293 / DSM 20343 / BCRC 11652 / CCM 1803 / JCM 6124 / NCDO 523 / NBRC 100496 / NCIMB 8023 / NCTC 12954 / NRRL B-1118 / 37Y).